A 130-amino-acid chain; its full sequence is Small ribosomal subunit protein uS8 (130 aa).

It belongs to the universal ribosomal protein uS8 family. In terms of assembly, part of the 30S ribosomal subunit. Contacts proteins S5 and S12.

One of the primary rRNA binding proteins, it binds directly to 16S rRNA central domain where it helps coordinate assembly of the platform of the 30S subunit. In Coxiella burnetii (strain Dugway 5J108-111), this protein is Small ribosomal subunit protein uS8.